The sequence spans 375 residues: Histidine biosynthesis bifunctional protein HisB (375 aa).

Positions 1 to 168 are histidinol-phosphatase; that stretch reads MTPILFVDRD…GIAHELADAP (168 aa). D8 functions as the Nucleophile in the catalytic mechanism. Residues D8, D10, and D128 each coordinate Mg(2+). Residue D10 is the Proton donor of the active site. An imidazoleglycerol-phosphate dehydratase region spans residues 169 to 375; the sequence is RRALVQRNTK…TALPTTKGTL (207 aa).

This sequence in the N-terminal section; belongs to the histidinol-phosphatase family. It in the C-terminal section; belongs to the imidazoleglycerol-phosphate dehydratase family. The cofactor is Mg(2+).

The protein localises to the cytoplasm. The catalysed reaction is D-erythro-1-(imidazol-4-yl)glycerol 3-phosphate = 3-(imidazol-4-yl)-2-oxopropyl phosphate + H2O. The enzyme catalyses L-histidinol phosphate + H2O = L-histidinol + phosphate. Its pathway is amino-acid biosynthesis; L-histidine biosynthesis; L-histidine from 5-phospho-alpha-D-ribose 1-diphosphate: step 6/9. It participates in amino-acid biosynthesis; L-histidine biosynthesis; L-histidine from 5-phospho-alpha-D-ribose 1-diphosphate: step 8/9. The protein is Histidine biosynthesis bifunctional protein HisB of Xanthomonas axonopodis pv. citri (strain 306).